The following is a 410-amino-acid chain: Arginine deiminase (410 aa).

C400 functions as the Amidino-cysteine intermediate in the catalytic mechanism.

This sequence belongs to the arginine deiminase family.

It is found in the cytoplasm. It catalyses the reaction L-arginine + H2O = L-citrulline + NH4(+). It participates in amino-acid degradation; L-arginine degradation via ADI pathway; carbamoyl phosphate from L-arginine: step 1/2. This Streptococcus uberis (strain ATCC BAA-854 / 0140J) protein is Arginine deiminase.